The sequence spans 132 residues: Chemokine-like protein TAFA-5 (132 aa).

Residues 1–43 form the signal peptide; it reads MAPSPRTSSRQDATALPSMSSTFWAFMILASLLIAYCSQLAAG. Asparagine 113 is a glycosylation site (N-linked (GlcNAc...) asparagine).

This sequence belongs to the TAFA family. In terms of tissue distribution, expressed in the subcutaneous, brown, epididymal and perirenal adipose tissue (at protein level).

Its subcellular location is the secreted. In terms of biological role, acts as a chemokine-like protein by regulating cell proliferation and migration through activation of G protein-coupled receptors (GPCRs), such as S1PR2 and FPR2. Stimulates chemotactic migration of macrophages mediated by the MAPK3/ERK1 and AKT1 pathway. Blocks TNFSF11/RANKL-induced osteoclast formation from macrophages by inhibiting up-regulation of osteoclast fusogenic and differentiation genes. Stimulation of macrophage migration and inhibition of osteoclast formation is mediated through the GPCR FPR2. Acts as an adipokine by negatively regulating vascular smooth muscle cell (VSMC) proliferation and migration in response to platelet-derived growth factor stimulation via GPCR S1PR2 and G protein GNA12/GNA13-transmitted RHOA signaling. Inhibits injury-induced cell proliferation and neointima formation in the femoral arteries. The sequence is that of Chemokine-like protein TAFA-5 (Tafa5) from Mus musculus (Mouse).